The chain runs to 546 residues: Chaperonin GroEL (546 aa).

ATP is bound by residues 30-33 (TLGP), Lys51, 87-91 (DGTTT), Gly415, 479-481 (NAA), and Asp495.

Belongs to the chaperonin (HSP60) family. As to quaternary structure, forms a cylinder of 14 subunits composed of two heptameric rings stacked back-to-back. Interacts with the co-chaperonin GroES.

It is found in the cytoplasm. It carries out the reaction ATP + H2O + a folded polypeptide = ADP + phosphate + an unfolded polypeptide.. Together with its co-chaperonin GroES, plays an essential role in assisting protein folding. The GroEL-GroES system forms a nano-cage that allows encapsulation of the non-native substrate proteins and provides a physical environment optimized to promote and accelerate protein folding. In Pseudomonas entomophila (strain L48), this protein is Chaperonin GroEL.